The primary structure comprises 536 residues: REST corepressor 2 (536 aa).

Residues 1–44 (MERSGSGVLSRSRAKTVTNGNSQHSEEESSDEEHPNDSMIRVGG) form a disordered region. Residues 24 to 36 (HSEEESSDEEHPN) are compositionally biased toward basic and acidic residues. The region spanning 38-123 (SMIRVGGDYQ…KSLADLANFT (86 aa)) is the ELM2 domain. Positions 124–175 (PFPDEWTVEDKVLFEQAFSFHGKSFHRIQQMLPDKMITSLVKYYYSWKKTRT) constitute an SANT 1 domain. The interval 179-264 (VMDRQARKLL…RARRRPPKGM (86 aa)) is disordered. Positions 197–211 (NDEIEEGDPGSDSDF) are enriched in acidic residues. Residues 249-262 (YRHHPLRARRRPPK) show a composition bias toward basic residues. A coiled-coil region spans residues 283–315 (VTIRQLDTQLVSLKRQVQKIKQTNSVLRNNLGD). Residues 328-379 (KINSRWTTEEQLLAVQAVRRYGKDFAAIADVIGNKTVAQVSSFFVSYRRRFN) form the SANT 2 domain. A disordered region spans residues 389–536 (AEQEVQGSSG…GLKVESPQSH (148 aa)). Residues 391–406 (QEVQGSSGRTVNTELN) are compositionally biased toward polar residues. Residues 422-449 (SPPHSDSPLPSSEGSASGNHSSAQSSPP) show a composition bias toward low complexity. Over residues 450 to 476 (LTQPPPLLRPAPPSAPPSLLRQPPPLQ) the composition is skewed to pro residues.

Belongs to the CoREST family.

The protein localises to the nucleus. In terms of biological role, may act as a component of a corepressor complex that represses transcription. The chain is REST corepressor 2 (rcor2) from Danio rerio (Zebrafish).